The sequence spans 352 residues: Biotin synthase (352 aa).

In terms of domain architecture, Radical SAM core spans 44–262 (NRVQVSTLLS…LAVARIMMPK (219 aa)). 3 residues coordinate [4Fe-4S] cluster: cysteine 59, cysteine 63, and cysteine 66. [2Fe-2S] cluster-binding residues include cysteine 103, cysteine 134, cysteine 194, and arginine 266.

Belongs to the radical SAM superfamily. Biotin synthase family. In terms of assembly, homodimer. [4Fe-4S] cluster serves as cofactor. It depends on [2Fe-2S] cluster as a cofactor.

The enzyme catalyses (4R,5S)-dethiobiotin + (sulfur carrier)-SH + 2 reduced [2Fe-2S]-[ferredoxin] + 2 S-adenosyl-L-methionine = (sulfur carrier)-H + biotin + 2 5'-deoxyadenosine + 2 L-methionine + 2 oxidized [2Fe-2S]-[ferredoxin]. It functions in the pathway cofactor biosynthesis; biotin biosynthesis; biotin from 7,8-diaminononanoate: step 2/2. Catalyzes the conversion of dethiobiotin (DTB) to biotin by the insertion of a sulfur atom into dethiobiotin via a radical-based mechanism. This is Biotin synthase from Ectopseudomonas mendocina (strain ymp) (Pseudomonas mendocina).